A 211-amino-acid chain; its full sequence is Protein-L-isoaspartate O-methyltransferase (211 aa).

Ser-62 is an active-site residue.

The protein belongs to the methyltransferase superfamily. L-isoaspartyl/D-aspartyl protein methyltransferase family.

The protein resides in the cytoplasm. The enzyme catalyses [protein]-L-isoaspartate + S-adenosyl-L-methionine = [protein]-L-isoaspartate alpha-methyl ester + S-adenosyl-L-homocysteine. Its function is as follows. Catalyzes the methyl esterification of L-isoaspartyl residues in peptides and proteins that result from spontaneous decomposition of normal L-aspartyl and L-asparaginyl residues. It plays a role in the repair and/or degradation of damaged proteins. This chain is Protein-L-isoaspartate O-methyltransferase, found in Shewanella putrefaciens (strain CN-32 / ATCC BAA-453).